We begin with the raw amino-acid sequence, 313 residues long: Intelectin-1b (313 aa).

The N-terminal stretch at M1 to A19 is a signal peptide. The 220-residue stretch at S32–C251 folds into the Fibrinogen C-terminal domain. C41 and C70 are disulfide-bonded. The Ca(2+) site is built by H86, E87, N89, G92, G97, D98, and D133. Intrachain disulfides connect C94–C280, C199–C259, and C251–C265. N163 is a glycosylation site (N-linked (GlcNAc...) asparagine). Ca(2+)-binding residues include N260, E262, E274, and D282. Residues E262 to H263 and E274 each bind a carbohydrate. A lipid anchor (GPI-anchor amidated serine) is attached at S298. The propeptide occupies N299–R313.

Expressed in the globlet and Paneth cells of the small intestine of infected mice. Expressed in the ileum of uninfected mice.

The protein localises to the cell membrane. It localises to the secreted. Functionally, may play a protective role in the innate immune response to parasite infection. This chain is Intelectin-1b (Itln1b), found in Mus musculus (Mouse).